Reading from the N-terminus, the 206-residue chain is MLILASASQSRKKLLENCQIEFIQISSNFDETSIKEKNIFNLALELSFQKANSLSKSIKKISLPEEINYGPLGILGCDSIFEFKGEAYGKPSDKAEAFIRWKKMSGEFGFLHTGHTLIIGNFDSTSNIFKITDTIKKTVSSRVYFSKLEDWEIKTYIDTNEPLYCAGGFALEGIGGKYIEKIEGCFSNVMGLSLPWLRKNLLKQKI.

Catalysis depends on D78, which acts as the Proton acceptor.

Belongs to the Maf family. Requires a divalent metal cation as cofactor.

The protein localises to the cytoplasm. It catalyses the reaction a ribonucleoside 5'-triphosphate + H2O = a ribonucleoside 5'-phosphate + diphosphate + H(+). The catalysed reaction is a 2'-deoxyribonucleoside 5'-triphosphate + H2O = a 2'-deoxyribonucleoside 5'-phosphate + diphosphate + H(+). In terms of biological role, nucleoside triphosphate pyrophosphatase. May have a dual role in cell division arrest and in preventing the incorporation of modified nucleotides into cellular nucleic acids. This chain is Nucleoside triphosphate pyrophosphatase, found in Prochlorococcus marinus (strain MIT 9312).